A 346-amino-acid chain; its full sequence is Dehydrogenase azaJ (346 aa).

43-48 is an NADP(+) binding site; that stretch reads VDYATQ. Residue 133–140 coordinates substrate; sequence LAFSTAIV. Residues 170–173, 193–196, Tyr-211, and 251–252 contribute to the NADP(+) site; these read ATSV, SPHN, and LN. 269-273 contacts substrate; the sequence is APPNV. NADP(+) is bound at residue 336–337; sequence VS.

It belongs to the zinc-containing alcohol dehydrogenase family.

Its pathway is secondary metabolite biosynthesis. Functionally, dehydrogenase; part of the gene cluster that mediates the biosynthesis of azaphilones, a class of fungal metabolites characterized by a highly oxygenated pyrano-quinone bicyclic core and exhibiting a broad range of bioactivities. In the first step, the non-reducing polyketide synthase azaA forms the hexaketide precursor from successive condensations of five malonyl-CoA units, presumably with a simple acetyl-CoA starter unit. The reactive polyketide chain then undergoes a PT-mediated C2-C7 cyclization to afford the aromatic ring and is eventually released as an aldehyde through the R-domain. The putative ketoreductase azaE is proposed to catalyze the reduction of the terminal ketone resulting in the early culture product FK17-P2a. The monooxygenase azaH was demonstrated to be the only enzyme required to convert FK17-P2a to azanigerone E. AzaH first hydroxylates the benzaldehyde intermediate FK17-P2a at C4, which triggers the formation of the pyran-ring to afford azanigerone E. In parallel, the 2,4-dimethylhexanoyl chain is synthesized by the HR-PKS azaB and is proposed to be transferred to the C4-hydroxyl of azanigerone E by the acyltransferase azaD directly from the ACP domain of azaB. Alternatively, the 2,4-dimethyl-hexanoyl chain may be offloaded from the HR-PKS as a carboxylic acid and converted to an acyl-CoA by azaF. The resulting acyl-CoA molecule could then be taken up as a substrate by AzaD to form azanigerone B. To yield the carboxylic acid substituent in azanigerone A, the hydroxypropyl side chain of azanigerone B would need to undergo a C-C oxidative cleavage catalyzed by cytochrome P450 AzaI. AzaI is proposed to act on a vicinal diol that leads to a C-C bond scission either through an alkoxyradical intermediate or a peroxy complex. In the biosynthesis of azanigerone A, azanigerone B first undergoes hydroxylation at C10, possibly catalyzed by one of the two FAD-dependent monooxygenases encoded in the cluster, azaG or azaL, resulting in the vicinal diol azanigerone C. Oxidative cleavage of azanigerone C by azaI would yield the corresponding aldehyde derivative of azanigerone A. Finally, the dehydrogenase azaJ is proposed to convert the aldehyde functional group into the carboxylic acid, completing the conversion from azanigerone B to azanigerone A. Alternatively, the oxidation of aldehyde to carboxylic acid may be catalyzed by the same P450 enzyme azaI via consecutive oxidation or by endogenous alcohol dehydrogenase. In Aspergillus niger (strain ATCC 1015 / CBS 113.46 / FGSC A1144 / LSHB Ac4 / NCTC 3858a / NRRL 328 / USDA 3528.7), this protein is Dehydrogenase azaJ.